We begin with the raw amino-acid sequence, 64 residues long: Large ribosomal subunit protein uL29 (64 aa).

The protein belongs to the universal ribosomal protein uL29 family.

This Porphyromonas gingivalis (strain ATCC 33277 / DSM 20709 / CIP 103683 / JCM 12257 / NCTC 11834 / 2561) protein is Large ribosomal subunit protein uL29.